A 1167-amino-acid chain; its full sequence is Pesticidal crystal protein Cry21Aa (1167 aa).

This sequence belongs to the delta endotoxin family.

Endotoxin with nematicidal activity. This Bacillus thuringiensis protein is Pesticidal crystal protein Cry21Aa (cry21Aa).